A 503-amino-acid chain; its full sequence is MAAALRFDNIGKVFPGVRALDGISFDVQAGQVHGLMGENGAGKSTLLKILGGEYQPDSGGVLVDGQAMRFPSAAASIAAGVAVIHQELQYVPDLTVAENLLLGRLPSALGWVRKHTAQRFVRERLAAMGVDLDPQAKLRRLSIAQRQMVEICKALMRNARVIALDEPTSSLSHRETEVLFKLVDDLRRDGRALIYISHRMDEIYRLCDACTIFRDGRQVASHASLAQVPRETLVRQMVGREISDIYHYEPRALGDVRLSARALEGDALRSGASFDVRAGEIVGFFGLVGAGRSELMRVIYGADRRTGGALTLDGKPLDIRSTRDAIRHGIVLCPEDRKEEGIVAHASVAENINISCRRHALRAGLFLDLKREAETAERFIKLLKIKTPNRRQKIRFLSGGNQQKAILARWLAEPDLKVVILDEPTRGIDVGAKHEIYGVIYELAKRGCAIVMVSSELPEVLGVSDRIVVMREGRIAGELARGEANEEAVLNLALPQGAIAHAA.

ABC transporter domains are found at residues 5–240 and 253–497; these read LRFD…MVGR and LGDV…LPQG. Residue 37 to 44 coordinates ATP; the sequence is GENGAGKS.

The protein belongs to the ABC transporter superfamily. Arabinose importer (TC 3.A.1.2.2) family. The complex is composed of two ATP-binding proteins (AraG), two transmembrane proteins (AraH) and a solute-binding protein (AraF).

The protein resides in the cell inner membrane. It catalyses the reaction L-arabinose(out) + ATP + H2O = L-arabinose(in) + ADP + phosphate + H(+). In terms of biological role, part of the ABC transporter complex AraFGH involved in arabinose import. Responsible for energy coupling to the transport system. This Burkholderia thailandensis (strain ATCC 700388 / DSM 13276 / CCUG 48851 / CIP 106301 / E264) protein is Arabinose import ATP-binding protein AraG 1.